The following is a 331-amino-acid chain: MKTSIRYALLAAALTAATPALADITVYNGQHKEAAQAVADAFTRATGIKVKLNSAKGDQLAGQIKEEGSRSPADVFYSEQIPALATLSAANLLEPLPASTINETRGKGVPVAAKKDWVALSGRSRVVVYDTRKLSEKDLEKSVLNYATPKWKNRIGYAPTSGAFLEQVVAIVKLKGEAAALKWLKGLKEYGKPYAKNSVALQAVENGEIDAALINNYYWHAFAREKGVQNVHTRLNFVRHRDPGALVTYSGAAVLKSSQNKDEAKKFVAFLASKEGQRALTAVRAEYPLNPHVVSTFNLEPIAKLEAPQVSATTVSEKEHATRLLEQAGMK.

A signal peptide spans 1-22 (MKTSIRYALLAAALTAATPALA). 4 residues coordinate Fe cation: histidine 31, glutamate 79, tyrosine 217, and tyrosine 218.

This sequence belongs to the bacterial solute-binding protein 1 family.

Its subcellular location is the periplasm. Functionally, this protein may be a central component in the iron-acquisition system. The chain is Major ferric iron-binding protein (fbpA) from Neisseria meningitidis serogroup B (strain ATCC BAA-335 / MC58).